The following is a 113-amino-acid chain: Histone H3-8 (113 aa).

The segment covering 1–17 has biased composition (basic residues); the sequence is NTGAKAPRKHLANKAAR. Residues 1 to 31 form a disordered region; sequence NTGAKAPRKHLANKAARKTAAPANAGIKKPH.

Belongs to the histone H3 family. As to quaternary structure, the nucleosome is a histone octamer containing two molecules each of H2A, H2B, H3 and H4 assembled in one H3-H4 heterotetramer and two H2A-H2B heterodimers. The octamer wraps approximately 147 bp of DNA.

Its subcellular location is the nucleus. The protein resides in the chromosome. Functionally, core component of nucleosome. Nucleosomes wrap and compact DNA into chromatin, limiting DNA accessibility to the cellular machineries which require DNA as a template. Histones thereby play a central role in transcription regulation, DNA repair, DNA replication and chromosomal stability. DNA accessibility is regulated via a complex set of post-translational modifications of histones, also called histone code, and nucleosome remodeling. The protein is Histone H3-8 (H3-8) of Stylonychia lemnae (Ciliate).